Here is a 147-residue protein sequence, read N- to C-terminus: Large ribosomal subunit protein bL21 (147 aa).

A disordered region spans residues 115–147 (KSIKVGKPTPKSSSKKEETVKKETKPKSEKSTN). The span at 128–147 (SKKEETVKKETKPKSEKSTN) shows a compositional bias: basic and acidic residues.

It belongs to the bacterial ribosomal protein bL21 family. In terms of assembly, part of the 50S ribosomal subunit. Contacts protein L20.

This protein binds to 23S rRNA in the presence of protein L20. The protein is Large ribosomal subunit protein bL21 of Prochlorococcus marinus (strain MIT 9215).